Here is a 168-residue protein sequence, read N- to C-terminus: HTH-type transcriptional regulator IscR (168 aa).

In terms of domain architecture, HTH rrf2-type spans 2 to 131 (KLTSKGRYAV…NNITLGELMK (130 aa)). Residues 28–51 (LADISERQGISLSYLEQLFSKLRK) constitute a DNA-binding region (H-T-H motif). Positions 92, 98, and 104 each coordinate [2Fe-2S] cluster.

[2Fe-2S] cluster serves as cofactor.

In terms of biological role, regulates the transcription of several operons and genes involved in the biogenesis of Fe-S clusters and Fe-S-containing proteins. In Vibrio campbellii (strain ATCC BAA-1116), this protein is HTH-type transcriptional regulator IscR.